A 375-amino-acid chain; its full sequence is Alpha-2,8-sialyltransferase 8B (375 aa).

Residues 1 to 6 (MQLQFR) are Cytoplasmic-facing. A helical; Signal-anchor for type II membrane protein transmembrane segment spans residues 7-23 (SWMLAALTLLVVFLIFA). Residues 24 to 375 (DISEIEEEIG…LTVGQCDGAT (352 aa)) are Lumenal-facing. 4 N-linked (GlcNAc...) asparagine glycosylation sites follow: N60, N72, N89, and N134. 2 disulfides stabilise this stretch: C157–C307 and C171–C371. N162 and N185 together coordinate CMP-N-acetyl-beta-neuraminate. N219 and N234 each carry an N-linked (GlcNAc...) asparagine glycan. 6 residues coordinate CMP-N-acetyl-beta-neuraminate: T294, T295, G296, W316, Y329, and H330. H346 acts as the Proton donor/acceptor in catalysis.

Belongs to the glycosyltransferase 29 family. In terms of processing, autopolysialylated. Autopolysialylation is not a prerequisite for the polysialylation acitity, but enhances the polysialylation acitity. As to expression, expressed only in newborn brain.

Its subcellular location is the golgi apparatus membrane. The protein localises to the secreted. The protein resides in the cell membrane. The catalysed reaction is [N-acetyl-alpha-D-neuraminosyl-(2-&gt;8)](n) + CMP-N-acetyl-beta-neuraminate = [N-acetyl-alpha-D-neuraminosyl-(2-&gt;8)](n+1) + CMP + H(+). It functions in the pathway protein modification; protein glycosylation. Its function is as follows. Catalyzes the transfer of a sialic acid from a CMP-linked sialic acid donor onto a terminal alpha-2,3-, alpha-2,6-, or alpha-2,8-linked sialic acid of an N-linked glycan acceptor through alpha-2,8-linkages. Therefore, participates in polysialic acid synthesis on various sialylated N-acetyllactosaminyl oligosaccharides (alpha-2,3-, alpha-2,6-, or alpha-2,8-linked sialic acid), including NCAM1, NCAM1 N-glycans, FETUB N-glycans, and to a lesser extent sialylparagloboside (SPG) and AHSG, which does not require the initial addition of an alpha 2,8-sialic acid. However, does not exhibit sialic acid-polymerase activity. Catalyzes polysialic acid synthesis in the hippocampal on NCAM1 and supports neurite outgrowth. ST8SIA2-mediated polysialylation influences on oligodendrocyte differentiation and may promote the integrity of myelin and axons. The protein is Alpha-2,8-sialyltransferase 8B of Rattus norvegicus (Rat).